The sequence spans 187 residues: Probable chemoreceptor glutamine deamidase CheD (187 aa).

Residues 164–187 are disordered; it reads APQDVRRPTPPPMPAVASGDVDLF.

It belongs to the CheD family.

The catalysed reaction is L-glutaminyl-[protein] + H2O = L-glutamyl-[protein] + NH4(+). Probably deamidates glutamine residues to glutamate on methyl-accepting chemotaxis receptors (MCPs), playing an important role in chemotaxis. The protein is Probable chemoreceptor glutamine deamidase CheD of Caulobacter vibrioides (strain ATCC 19089 / CIP 103742 / CB 15) (Caulobacter crescentus).